A 201-amino-acid chain; its full sequence is Recombination protein RecR (201 aa).

The segment at 57–74 (CSICGNITATDTDPCVIC) adopts a C4-type zinc-finger fold. The Toprim domain maps to 82-178 (STVFVVENSR…AVTRLAHGLA (97 aa)).

This sequence belongs to the RecR family.

Its function is as follows. May play a role in DNA repair. It seems to be involved in an RecBC-independent recombinational process of DNA repair. It may act with RecF and RecO. This chain is Recombination protein RecR, found in Leuconostoc mesenteroides subsp. mesenteroides (strain ATCC 8293 / DSM 20343 / BCRC 11652 / CCM 1803 / JCM 6124 / NCDO 523 / NBRC 100496 / NCIMB 8023 / NCTC 12954 / NRRL B-1118 / 37Y).